A 107-amino-acid polypeptide reads, in one-letter code: U1-lycotoxin-Ls1s (107 aa).

The first 20 residues, 1–20 (MMKVLVVVALLVTLISYSSS), serve as a signal peptide directing secretion. The propeptide occupies 21 to 41 (EGIDDLEADELLSLMANEQTR). 4 cysteine pairs are disulfide-bonded: cysteine 44-cysteine 59, cysteine 51-cysteine 68, cysteine 58-cysteine 86, and cysteine 70-cysteine 84.

Belongs to the neurotoxin 19 (CSTX) family. 04 (U1-Lctx) subfamily. Expressed by the venom gland.

The protein localises to the secreted. This chain is U1-lycotoxin-Ls1s, found in Lycosa singoriensis (Wolf spider).